We begin with the raw amino-acid sequence, 355 residues long: Cobalt-precorrin-5B C(1)-methyltransferase (355 aa).

Belongs to the CbiD family.

The catalysed reaction is Co-precorrin-5B + S-adenosyl-L-methionine = Co-precorrin-6A + S-adenosyl-L-homocysteine. The protein operates within cofactor biosynthesis; adenosylcobalamin biosynthesis; cob(II)yrinate a,c-diamide from sirohydrochlorin (anaerobic route): step 6/10. Functionally, catalyzes the methylation of C-1 in cobalt-precorrin-5B to form cobalt-precorrin-6A. This Parasynechococcus marenigrum (strain WH8102) protein is Cobalt-precorrin-5B C(1)-methyltransferase.